Reading from the N-terminus, the 134-residue chain is uncharacterized protein (134 aa).

Helical transmembrane passes span 16 to 36 and 43 to 63; these read IFSF…NTKL and IAYF…IHGT.

Belongs to the plectrovirus ORF5 family.

The protein localises to the host membrane. This is an uncharacterized protein from Spiroplasma citri (SpV1).